Reading from the N-terminus, the 303-residue chain is Aspartate carbamoyltransferase catalytic subunit (303 aa).

Residues Arg51 and Thr52 each contribute to the carbamoyl phosphate site. An L-aspartate-binding site is contributed by Lys80. Arg101, His129, and Gln132 together coordinate carbamoyl phosphate. L-aspartate contacts are provided by Arg162 and Arg221. Positions 260 and 261 each coordinate carbamoyl phosphate.

The protein belongs to the aspartate/ornithine carbamoyltransferase superfamily. ATCase family. Heterooligomer of catalytic and regulatory chains.

It carries out the reaction carbamoyl phosphate + L-aspartate = N-carbamoyl-L-aspartate + phosphate + H(+). It participates in pyrimidine metabolism; UMP biosynthesis via de novo pathway; (S)-dihydroorotate from bicarbonate: step 2/3. Catalyzes the condensation of carbamoyl phosphate and aspartate to form carbamoyl aspartate and inorganic phosphate, the committed step in the de novo pyrimidine nucleotide biosynthesis pathway. The protein is Aspartate carbamoyltransferase catalytic subunit of Saccharolobus islandicus (strain M.14.25 / Kamchatka #1) (Sulfolobus islandicus).